Reading from the N-terminus, the 385-residue chain is Suppressor protein STP22 of temperature-sensitive alpha-factor receptor and arginine permease (385 aa).

The UEV domain occupies 12–161 (AVVNWLFKVI…LHEPPQDQAP (150 aa)). Residues 155 to 219 (PPQDQAPSLP…DMDNTDISPT (65 aa)) form a disordered region. Over residues 168 to 177 (NTQLQQEQNT) the composition is skewed to polar residues. The span at 178–201 (PPLPPKPKSPHLKPPLPPPPPPQP) shows a compositional bias: pro residues. A coiled-coil region spans residues 272 to 300 (LRAVEQAIEQTMHSLNAQIDVLTANRAKV). One can recognise an SB domain in the interval 322 to 385 (TDGLNQLYNL…HIQRITSPLS (64 aa)).

Belongs to the ubiquitin-conjugating enzyme family. UEV subfamily. Component of the ESCRT-I complex (endosomal sorting complex required for transport I) which consists of STP22, VPS28, SRN2 and MVB12 in a 1:1:1:1 stoichiometry. Interacts with HSE1 and VPS27. Interacts with MVB12 and SRN2.

It localises to the cytoplasm. The protein localises to the endosome. It is found in the late endosome membrane. Component of the ESCRT-I complex, a regulator of vesicular trafficking process. Binds to ubiquitinated cargo proteins and is required for the sorting of endocytic ubiquitinated cargos into multivesicular bodies (MVBs). Mediates the association to the ESCRT-0 complex. Required for vacuolar targeting of temperature-sensitive plasma membrane proteins STE2 and CAN1. In Saccharomyces cerevisiae (strain ATCC 204508 / S288c) (Baker's yeast), this protein is Suppressor protein STP22 of temperature-sensitive alpha-factor receptor and arginine permease (STP22).